Reading from the N-terminus, the 308-residue chain is MAETRITADTAMNGQIEETTAWKDFLALIKVGIVYSNLITTFTGMWLAFYFSNLSFLGNLDIVLFTLAGSSLIIAGSCVINNFYDRDIDQLMQRTRTRPTVTGKIQPSQALWFGILLTALGFIMLLMTNLTAAGVGFVGVFTYVFLYTMWSKRRYTVNTIIGSVSGAVPPLIGWTAVQGSIGVEAWVLFLIMFIWQIPHFLALAIKKTEEYRAANIPMLPVVHGFEVTKRQIIIWIACLMPLPFFLGGLGLPIVILGTVLNIGWLVCGLVGYRSKNIMKWATLMFVYSLNYLTIFFVAMVVFTLFKIG.

A run of 9 helical transmembrane segments spans residues 31-51, 60-80, 110-130, 131-151, 157-177, 185-205, 232-252, 253-273, and 285-305; these read VGIV…AFYF, LDIV…SCVI, ALWF…MTNL, TAAG…TMWS, VNTI…WTAV, AWVL…ALAI, IIIW…LGLP, IVIL…VGYR, and FVYS…FTLF.

The protein belongs to the UbiA prenyltransferase family. Protoheme IX farnesyltransferase subfamily. In terms of assembly, interacts with CtaA.

It localises to the cell membrane. It carries out the reaction heme b + (2E,6E)-farnesyl diphosphate + H2O = Fe(II)-heme o + diphosphate. It participates in porphyrin-containing compound metabolism; heme O biosynthesis; heme O from protoheme: step 1/1. Its function is as follows. Converts heme B (protoheme IX) to heme O by substitution of the vinyl group on carbon 2 of heme B porphyrin ring with a hydroxyethyl farnesyl side group. This chain is Protoheme IX farnesyltransferase, found in Bacillus licheniformis (strain ATCC 14580 / DSM 13 / JCM 2505 / CCUG 7422 / NBRC 12200 / NCIMB 9375 / NCTC 10341 / NRRL NRS-1264 / Gibson 46).